Reading from the N-terminus, the 104-residue chain is L-rhamnose mutarotase (104 aa).

Substrate is bound at residue Y18. The active-site Proton donor is the H22. Substrate is bound by residues Y41 and W76–W77.

This sequence belongs to the rhamnose mutarotase family. In terms of assembly, homodimer.

The protein resides in the cytoplasm. It catalyses the reaction alpha-L-rhamnose = beta-L-rhamnose. It functions in the pathway carbohydrate metabolism; L-rhamnose metabolism. Functionally, involved in the anomeric conversion of L-rhamnose. The chain is L-rhamnose mutarotase from Shigella sonnei (strain Ss046).